The chain runs to 395 residues: S-adenosylmethionine synthase (395 aa).

His14 is an ATP binding site. Asp16 contacts Mg(2+). Glu42 provides a ligand contact to K(+). L-methionine-binding residues include Glu55 and Gln98. Residues 98 to 108 are flexible loop; it reads QSPDIALGVDK. Residues 175–177, 242–243, Asp251, 257–258, Ala274, and Lys278 each bind ATP; these read DGK, RF, and RK. L-methionine is bound at residue Asp251. Position 282 (Lys282) interacts with L-methionine.

It belongs to the AdoMet synthase family. As to quaternary structure, homotetramer; dimer of dimers. Requires Mg(2+) as cofactor. The cofactor is K(+).

Its subcellular location is the cytoplasm. It catalyses the reaction L-methionine + ATP + H2O = S-adenosyl-L-methionine + phosphate + diphosphate. It participates in amino-acid biosynthesis; S-adenosyl-L-methionine biosynthesis; S-adenosyl-L-methionine from L-methionine: step 1/1. Functionally, catalyzes the formation of S-adenosylmethionine (AdoMet) from methionine and ATP. The overall synthetic reaction is composed of two sequential steps, AdoMet formation and the subsequent tripolyphosphate hydrolysis which occurs prior to release of AdoMet from the enzyme. The chain is S-adenosylmethionine synthase from Thermosipho africanus (strain TCF52B).